Reading from the N-terminus, the 184-residue chain is ATP synthase subunit b, chloroplastic (184 aa).

The helical transmembrane segment at 27-49 threads the bilayer; the sequence is LATNPINLSVVFGVLIFFGKGVL.

The protein belongs to the ATPase B chain family. As to quaternary structure, F-type ATPases have 2 components, F(1) - the catalytic core - and F(0) - the membrane proton channel. F(1) has five subunits: alpha(3), beta(3), gamma(1), delta(1), epsilon(1). F(0) has four main subunits: a(1), b(1), b'(1) and c(10-14). The alpha and beta chains form an alternating ring which encloses part of the gamma chain. F(1) is attached to F(0) by a central stalk formed by the gamma and epsilon chains, while a peripheral stalk is formed by the delta, b and b' chains.

Its subcellular location is the plastid. The protein resides in the chloroplast thylakoid membrane. In terms of biological role, f(1)F(0) ATP synthase produces ATP from ADP in the presence of a proton or sodium gradient. F-type ATPases consist of two structural domains, F(1) containing the extramembraneous catalytic core and F(0) containing the membrane proton channel, linked together by a central stalk and a peripheral stalk. During catalysis, ATP synthesis in the catalytic domain of F(1) is coupled via a rotary mechanism of the central stalk subunits to proton translocation. Component of the F(0) channel, it forms part of the peripheral stalk, linking F(1) to F(0). The protein is ATP synthase subunit b, chloroplastic of Barbarea verna (Land cress).